The sequence spans 53 residues: Large ribosomal subunit protein bL33A (53 aa).

The protein belongs to the bacterial ribosomal protein bL33 family.

The protein is Large ribosomal subunit protein bL33A of Mycoplasmoides gallisepticum (strain R(low / passage 15 / clone 2)) (Mycoplasma gallisepticum).